The primary structure comprises 247 residues: MyoD family inhibitor domain-containing protein (247 aa).

2 disordered regions span residues 1-67 (MSCA…NPSA) and 80-110 (QLQT…GNGI). An MDFI domain is found at 74–247 (QPERLPQLQT…MECCGICFPS (174 aa)). Phosphoserine occurs at positions 129 and 141.

This sequence belongs to the MDFI family. In terms of assembly, interacts with HAND1; the interaction sequesters Hand1 into the nucleolus and inhibits its activity. Interacts (via C-terminus) with ZIC2. Interacts (via C-terminus) with AXIN1, the histidine-rich region of CCNT1/cyclin-T and weakly with LEF1. Interacts with CCNT2. Interacts with GATA2. Interacts (via C-terminus) with Piezo channel composed of PIEZO1 or PIEZO2; the interaction prolongs Piezo channel inactivation. In terms of processing, palmitoylated. In terms of tissue distribution, in the embryo, robust expression is detected between 16.5 and 18.5 dpc in lung, kidney, and salivary glands. In the developing cardiovascular system, it is detected in lymphatic and cardiac valves (at protein level).

It is found in the cytoplasm. The protein resides in the secreted. Required to control the activity of various transcription factors through their sequestration in the cytoplasm. Retains nuclear Zic proteins ZIC1, ZIC2 and ZIC3 in the cytoplasm and inhibits their transcriptional activation. Modulates the expression from cellular promoters. Binds to the axin complex, resulting in an increase in the level of free beta-catenin. Affects axin-regulation of the WNT and JNK signaling pathways. Involved in the development of lymphatic vessel valves. Required to promote lymphatic endothelial cell migration, in a process that involves down-regulation of integrin beta 1 activation and control of cell adhesion to the extracellular matrix. Regulates the activity of mechanosensitive Piezo channel. The protein is MyoD family inhibitor domain-containing protein of Mus musculus (Mouse).